The primary structure comprises 453 residues: MNIVILAAGTGKRMRSALPKVLHPLAGRPLLSHVIDTARALAPSRLVVVIGHGAEQVRAAVAAPDVQFAVQEQQLGTGHAVRQALPLLDPSQPTLVLYGDVPLTRTATLKRLADAATDARYGVLTVTLDDPTGYGRIVRDQAGCVTRIVEQKDASPDELRIDEINTGIVVAPTAQLSMWLGALGNDNAQGEYYLTDVVEQAIEAGFEIVTTQPDDEWETLGVNSKAQLAELERIHQRNLADALLAAGVTLADPARIDVRGTLACGRDVSIDVNCVFEGDVTLADGVTIGANCVIRHAAIAAGARVDAFSHLDGATVGANAVVGPYARLRPGAVLAADAHVGNFVEVKNATLGQGSKANHLTYLGDADIGARVNVGAGTITCNYDGANKFRTVIEDDVFVGSDTQFVAPVRVGRGVTVAAGTTVWKDVAADMLVLNDKTQTAKSGYVRPVKKKS.

A pyrophosphorylase region spans residues 1–225 (MNIVILAAGT…EWETLGVNSK (225 aa)). UDP-N-acetyl-alpha-D-glucosamine-binding positions include 6–9 (LAAG), K20, Q71, 76–77 (GT), 98–100 (YGD), G135, E150, N165, and N223. D100 serves as a coordination point for Mg(2+). Position 223 (N223) interacts with Mg(2+). The interval 226 to 246 (AQLAELERIHQRNLADALLAA) is linker. The interval 247-453 (GVTLADPARI…GYVRPVKKKS (207 aa)) is N-acetyltransferase. Positions 329 and 347 each coordinate UDP-N-acetyl-alpha-D-glucosamine. H359 serves as the catalytic Proton acceptor. Positions 362 and 373 each coordinate UDP-N-acetyl-alpha-D-glucosamine. Residues A376, 382 to 383 (NY), S401, and A419 contribute to the acetyl-CoA site.

In the N-terminal section; belongs to the N-acetylglucosamine-1-phosphate uridyltransferase family. It in the C-terminal section; belongs to the transferase hexapeptide repeat family. Homotrimer. It depends on Mg(2+) as a cofactor.

It is found in the cytoplasm. It carries out the reaction alpha-D-glucosamine 1-phosphate + acetyl-CoA = N-acetyl-alpha-D-glucosamine 1-phosphate + CoA + H(+). It catalyses the reaction N-acetyl-alpha-D-glucosamine 1-phosphate + UTP + H(+) = UDP-N-acetyl-alpha-D-glucosamine + diphosphate. Its pathway is nucleotide-sugar biosynthesis; UDP-N-acetyl-alpha-D-glucosamine biosynthesis; N-acetyl-alpha-D-glucosamine 1-phosphate from alpha-D-glucosamine 6-phosphate (route II): step 2/2. It participates in nucleotide-sugar biosynthesis; UDP-N-acetyl-alpha-D-glucosamine biosynthesis; UDP-N-acetyl-alpha-D-glucosamine from N-acetyl-alpha-D-glucosamine 1-phosphate: step 1/1. It functions in the pathway bacterial outer membrane biogenesis; LPS lipid A biosynthesis. Functionally, catalyzes the last two sequential reactions in the de novo biosynthetic pathway for UDP-N-acetylglucosamine (UDP-GlcNAc). The C-terminal domain catalyzes the transfer of acetyl group from acetyl coenzyme A to glucosamine-1-phosphate (GlcN-1-P) to produce N-acetylglucosamine-1-phosphate (GlcNAc-1-P), which is converted into UDP-GlcNAc by the transfer of uridine 5-monophosphate (from uridine 5-triphosphate), a reaction catalyzed by the N-terminal domain. This Burkholderia mallei (strain NCTC 10247) protein is Bifunctional protein GlmU.